Reading from the N-terminus, the 1086-residue chain is Receptor-type guanylate cyclase gcy-6 (1086 aa).

Positions 1–21 (MIGVYLRSVIFPLLFVIQTIC) are cleaved as a signal peptide. The Extracellular portion of the chain corresponds to 22 to 487 (QPPGNVFHLG…PANVFFQYIG (466 aa)). N-linked (GlcNAc...) asparagine glycans are attached at residues asparagine 325, asparagine 343, asparagine 387, and asparagine 427. A helical transmembrane segment spans residues 488-508 (WFIAAIIIIFFTIMGAILAFI). At 509-1086 (YLCHAKQQEV…APKILKKKQD (578 aa)) the chain is on the cytoplasmic side. One can recognise a Protein kinase domain in the interval 560–836 (SSTLSEVGET…NDNLMDHVFN (277 aa)). ATP contacts are provided by residues 566 to 574 (VGETRNYLF) and lysine 589. The Guanylate cyclase domain occupies 894–1024 (TLFFSDVVSF…DAVNTASRME (131 aa)).

It belongs to the adenylyl cyclase class-4/guanylyl cyclase family. In terms of tissue distribution, expressed in both ASEL and ASER neurons throughout late embryonic and early larval stages. In adults, expressed asymmetrically in ASE left (ASEL) sensory neuron.

The protein localises to the cell membrane. The catalysed reaction is GTP = 3',5'-cyclic GMP + diphosphate. Guanylate cyclase involved in the production of the second messenger cGMP. Regulates chemotaxis responses toward the salt ion Mg(2+) and to a lesser extent toward Cl(1-) in ASE left (ASEL) sensory neuron. The protein is Receptor-type guanylate cyclase gcy-6 of Caenorhabditis elegans.